The primary structure comprises 469 residues: 3-isopropylmalate dehydratase large subunit (469 aa).

The [4Fe-4S] cluster site is built by Cys350, Cys410, and Cys413.

The protein belongs to the aconitase/IPM isomerase family. LeuC type 1 subfamily. In terms of assembly, heterodimer of LeuC and LeuD. [4Fe-4S] cluster serves as cofactor.

It carries out the reaction (2R,3S)-3-isopropylmalate = (2S)-2-isopropylmalate. The protein operates within amino-acid biosynthesis; L-leucine biosynthesis; L-leucine from 3-methyl-2-oxobutanoate: step 2/4. In terms of biological role, catalyzes the isomerization between 2-isopropylmalate and 3-isopropylmalate, via the formation of 2-isopropylmaleate. In Brucella abortus (strain S19), this protein is 3-isopropylmalate dehydratase large subunit.